A 255-amino-acid chain; its full sequence is Triosephosphate isomerase (255 aa).

9-11 (NWK) is a substrate binding site. Histidine 95 serves as the catalytic Electrophile. Glutamate 167 acts as the Proton acceptor in catalysis. Substrate-binding positions include glycine 173, serine 212, and 233 to 234 (GG).

This sequence belongs to the triosephosphate isomerase family. In terms of assembly, homodimer.

Its subcellular location is the cytoplasm. It carries out the reaction D-glyceraldehyde 3-phosphate = dihydroxyacetone phosphate. It participates in carbohydrate biosynthesis; gluconeogenesis. Its pathway is carbohydrate degradation; glycolysis; D-glyceraldehyde 3-phosphate from glycerone phosphate: step 1/1. Involved in the gluconeogenesis. Catalyzes stereospecifically the conversion of dihydroxyacetone phosphate (DHAP) to D-glyceraldehyde-3-phosphate (G3P). This chain is Triosephosphate isomerase, found in Serratia proteamaculans (strain 568).